A 639-amino-acid chain; its full sequence is Tetracycline resistance protein TetM from transposon Tn5251 (639 aa).

Residues 1–242 (MKIINIGVLA…VITNKFYSST (242 aa)) form the tr-type G domain. GTP-binding positions include 10–17 (AHVDAGKT), 74–78 (DTPGH), and 128–131 (NKID).

It belongs to the TRAFAC class translation factor GTPase superfamily. Classic translation factor GTPase family. TetM/TetO subfamily.

In terms of biological role, abolishes the inhibitory effect of tetracyclin on protein synthesis by a non-covalent modification of the ribosomes. The polypeptide is Tetracycline resistance protein TetM from transposon Tn5251 (tetM(5251)) (Streptococcus pneumoniae).